A 173-amino-acid polypeptide reads, in one-letter code: Macro domain-containing protein in gbd 3'region (173 aa).

Residues 1–173 enclose the Macro domain; that stretch reads MSGEHLQVVH…NYRLYRERLS (173 aa).

It belongs to the MacroD-type family.

This is Macro domain-containing protein in gbd 3'region from Cupriavidus necator (Alcaligenes eutrophus).